The primary structure comprises 178 residues: Major non-capsid protein (178 aa).

The protein belongs to the tenuiviruses NCP family.

Its subcellular location is the host cytoplasm. Functionally, induces the formation of large intracellular inclusion body, organized in amorphous and crystalline arrays. Presumably the main cause of the stripe disease observed in host. The chain is Major non-capsid protein from Rice stripe virus (isolate T) (RSV).